The chain runs to 119 residues: MAFDPASLTFDANGLIPAVAQDHATGEVLMMAWMNAEAVARTVETGRVTYWSRSRQAFWVKGETSGHVQRLIELRIDCDRDCLLLLIEQEGPACHTNRRSCFYTALREGEERIILDPMV.

A Mg(2+)-binding site is contributed by Asp-77. Residue Cys-78 coordinates Zn(2+). Asp-79 and Asp-81 together coordinate Mg(2+). Residues Cys-94 and Cys-101 each coordinate Zn(2+).

Belongs to the PRA-CH family. In terms of assembly, homodimer. It depends on Mg(2+) as a cofactor. Zn(2+) serves as cofactor.

It localises to the cytoplasm. It carries out the reaction 1-(5-phospho-beta-D-ribosyl)-5'-AMP + H2O = 1-(5-phospho-beta-D-ribosyl)-5-[(5-phospho-beta-D-ribosylamino)methylideneamino]imidazole-4-carboxamide. It functions in the pathway amino-acid biosynthesis; L-histidine biosynthesis; L-histidine from 5-phospho-alpha-D-ribose 1-diphosphate: step 3/9. Its function is as follows. Catalyzes the hydrolysis of the adenine ring of phosphoribosyl-AMP. This chain is Phosphoribosyl-AMP cyclohydrolase, found in Cereibacter sphaeroides (strain ATCC 17029 / ATH 2.4.9) (Rhodobacter sphaeroides).